Here is a 497-residue protein sequence, read N- to C-terminus: Putative zinc finger and SCAN domain-containing protein 5D (497 aa).

The 83-residue stretch at 41–123 (KAGRRMFSCP…DLLRNNRRPK (83 aa)) folds into the SCAN box domain. The segment at 148–342 (PASVRDDPRG…GPAGAVSHPN (195 aa)) is disordered. The span at 158–167 (VSSQRASSVN) shows a compositional bias: polar residues. Basic and acidic residues-rich tracts occupy residues 216–229 (PTLEKDLNVDREEN) and 249–259 (KEGKEPKKRAS). C2H2-type zinc fingers lie at residues 352-374 (FACGVCNKRFTCNSKLAIHMRSH), 380-402 (FQCNFCERCFTQLSDLRVHQRIH), 408-430 (YTCDICHKRFNRMFSLKCHKRSH), 436-458 (YKCKDCNQVFTYRKNLNEHKLIH), and 464-486 (YKCPKCLRAFRRPETLKYHQKTH).

It is found in the nucleus. The sequence is that of Putative zinc finger and SCAN domain-containing protein 5D from Homo sapiens (Human).